A 368-amino-acid polypeptide reads, in one-letter code: Membrane glycoprotein UL18 (368 aa).

The signal sequence occupies residues 1–19; sequence MMTMWCLTLFVLWMLRVVG. A helical transmembrane segment spans residues 326 to 346; the sequence is ISSVLLALLLCALLFAFLHYF.

Interacts with host LILRB1.

The protein resides in the host membrane. Its function is as follows. Plays a role in the protection against host NK cell cytotoxicity by interacting with and modulating the activity of the host inhibitory leukocyte Ig-like receptor 1/LILRB1, which is expressed on monocytes, dendritic cells, as well as subsets of T and NK cells. UL18 exerts an inhibitory effect on LIR-1+ NK cells, while it stimulates LIR-1- NK cell. In Homo sapiens (Human), this protein is Membrane glycoprotein UL18 (UL18).